The chain runs to 405 residues: S-adenosylmethionine synthase (405 aa).

Histidine 22 contacts ATP. Aspartate 24 is a binding site for Mg(2+). Position 50 (glutamate 50) interacts with K(+). Positions 63 and 107 each coordinate L-methionine. A flexible loop region spans residues 107 to 117 (QSPDIAQGVDR). ATP-binding positions include 184-186 (DGK), 250-251 (RF), aspartate 259, 265-266 (RK), alanine 282, and lysine 286. Residue aspartate 259 participates in L-methionine binding. Lysine 290 contacts L-methionine.

This sequence belongs to the AdoMet synthase family. In terms of assembly, homotetramer; dimer of dimers. The cofactor is Mg(2+). It depends on K(+) as a cofactor.

It is found in the cytoplasm. The enzyme catalyses L-methionine + ATP + H2O = S-adenosyl-L-methionine + phosphate + diphosphate. The protein operates within amino-acid biosynthesis; S-adenosyl-L-methionine biosynthesis; S-adenosyl-L-methionine from L-methionine: step 1/1. Its function is as follows. Catalyzes the formation of S-adenosylmethionine (AdoMet) from methionine and ATP. The overall synthetic reaction is composed of two sequential steps, AdoMet formation and the subsequent tripolyphosphate hydrolysis which occurs prior to release of AdoMet from the enzyme. The protein is S-adenosylmethionine synthase of Roseiflexus sp. (strain RS-1).